A 266-amino-acid polypeptide reads, in one-letter code: 15-hydroxyprostaglandin dehydrogenase [NAD(+)] (266 aa).

NAD(+) contacts are provided by residues 12–20 (GAAQGIGKA), 36–37 (DW), 63–65 (CDV), and Asn-91. Substrate contacts are provided by Ser-138 and Gln-148. Tyr-151 acts as the Proton acceptor in catalysis. Residues 151–155 (YCASK) and 186–188 (VKT) contribute to the NAD(+) site.

It belongs to the short-chain dehydrogenases/reductases (SDR) family. Homodimer.

The protein resides in the cytoplasm. It catalyses the reaction prostaglandin E2 + NAD(+) = 15-oxoprostaglandin E2 + NADH + H(+). The enzyme catalyses (15S)-hydroxy-(5Z,8Z,11Z,13E)-eicosatetraenoate + NAD(+) = 15-oxo-(5Z,8Z,11Z,13E)-eicosatetraenoate + NADH + H(+). It carries out the reaction (11R)-hydroxy-(5Z,8Z,12E,14Z)-eicosatetraenoate + NAD(+) = 11-oxo-(5Z,8Z,12E,14Z)-eicosatetraenoate + NADH + H(+). The catalysed reaction is lipoxin A4 + NAD(+) = 15-oxo-(5S,6R)-dihydroxy-(7E,9E,11Z,13E)-eicosatetraenoate + NADH + H(+). It catalyses the reaction 15-oxo-(5S,6R)-dihydroxy-(7E,9E,11Z)-eicosatrienoate + NADH + H(+) = (5S,6R,15S)-trihydroxy-(7E,9E,11Z)-eicosatrienoate + NAD(+). The enzyme catalyses prostaglandin A1 + NAD(+) = 15-oxo-prostaglandin A1 + NADH + H(+). It carries out the reaction prostaglandin E1 + NAD(+) = 15-oxoprostaglandin E1 + NADH + H(+). The catalysed reaction is 14-hydroxy-(4Z,7Z,10Z,12E,16Z,19Z)-docosahexaenoate + NAD(+) = 14-oxo-(4Z,7Z,10Z,12E,16Z,19Z)-docosahexaenoate + NADH + H(+). It catalyses the reaction resolvin E1 + NAD(+) = 18-oxo-resolvin E1 + NADH + H(+). The enzyme catalyses resolvin D1 + NAD(+) = 8-oxoresolvin D1 + NADH + H(+). It carries out the reaction resolvin D1 + NAD(+) = 17-oxoresolvin D1 + NADH + H(+). The catalysed reaction is resolvin D2 + NAD(+) = 7-oxoresolvin D2 + NADH + H(+). It catalyses the reaction resolvin D2 + NAD(+) = 16-oxoresolvin D2 + NADH + H(+). Its function is as follows. Catalyzes the NAD-dependent dehydrogenation (oxidation) of a broad array of hydroxylated polyunsaturated fatty acids (mainly eicosanoids and docosanoids, including prostaglandins, lipoxins and resolvins), yielding their corresponding keto (oxo) metabolites. Decreases the levels of the pro-proliferative prostaglandins such as prostaglandin E2 (whose activity is increased in cancer because of an increase in the expression of cyclooxygenase 2) and generates oxo-fatty acid products that can profoundly influence cell function by abrogating pro-inflammatory cytokine expression. Converts resolvins E1, D1 and D2 to their oxo products, which represents a mode of resolvin inactivation. Resolvin E1 plays important roles during the resolution phase of acute inflammation, while resolvins D1 and D2 have a unique role in obesity-induced adipose inflammation. This chain is 15-hydroxyprostaglandin dehydrogenase [NAD(+)] (Hpgd), found in Rattus norvegicus (Rat).